A 352-amino-acid chain; its full sequence is Quinolinate synthase (352 aa).

Iminosuccinate-binding residues include His-48 and Ser-69. Cys-114 contributes to the [4Fe-4S] cluster binding site. Iminosuccinate contacts are provided by residues 140-142 (YAN) and Ser-157. Cys-201 is a [4Fe-4S] cluster binding site. Residues 227–229 (HPE) and Thr-244 contribute to the iminosuccinate site. Cys-298 lines the [4Fe-4S] cluster pocket.

Belongs to the quinolinate synthase family. Type 1 subfamily. The cofactor is [4Fe-4S] cluster.

The protein localises to the cytoplasm. The catalysed reaction is iminosuccinate + dihydroxyacetone phosphate = quinolinate + phosphate + 2 H2O + H(+). It participates in cofactor biosynthesis; NAD(+) biosynthesis; quinolinate from iminoaspartate: step 1/1. In terms of biological role, catalyzes the condensation of iminoaspartate with dihydroxyacetone phosphate to form quinolinate. The polypeptide is Quinolinate synthase (Ectopseudomonas mendocina (strain ymp) (Pseudomonas mendocina)).